The chain runs to 807 residues: Ribosome-releasing factor 2, mitochondrial (807 aa).

A mitochondrion-targeting transit peptide spans 1-18 (MFCRKYAFQTWKQFSRFY). Residues 27–315 (SKTRNIGIIA…GITKYLPSPL (289 aa)) enclose the tr-type G domain. GTP is bound by residues 36-43 (AHIDAGKT), 100-104 (DTPGH), and 154-157 (NKMD).

Belongs to the TRAFAC class translation factor GTPase superfamily. Classic translation factor GTPase family. EF-G/EF-2 subfamily.

Its subcellular location is the mitochondrion. In terms of biological role, mitochondrial GTPase that mediates the disassembly of ribosomes from messenger RNA at the termination of mitochondrial protein biosynthesis. Not involved in the GTP-dependent ribosomal translocation step during translation elongation. This is Ribosome-releasing factor 2, mitochondrial from Candida dubliniensis (strain CD36 / ATCC MYA-646 / CBS 7987 / NCPF 3949 / NRRL Y-17841) (Yeast).